The primary structure comprises 414 residues: Protein RecA (414 aa).

Gly-78–Thr-85 is a binding site for ATP. Residues Gln-361–Asp-384 are compositionally biased toward basic and acidic residues. The disordered stretch occupies residues Gln-361 to Phe-414.

It belongs to the RecA family.

It is found in the cytoplasm. Its function is as follows. Can catalyze the hydrolysis of ATP in the presence of single-stranded DNA, the ATP-dependent uptake of single-stranded DNA by duplex DNA, and the ATP-dependent hybridization of homologous single-stranded DNAs. It interacts with LexA causing its activation and leading to its autocatalytic cleavage. This is Protein RecA from Treponema denticola (strain ATCC 35405 / DSM 14222 / CIP 103919 / JCM 8153 / KCTC 15104).